Reading from the N-terminus, the 139-residue chain is Ribosomal RNA large subunit methyltransferase H (139 aa).

S-adenosyl-L-methionine contacts are provided by residues Leu-57, Gly-88, and 107-112 (LSAMTF).

This sequence belongs to the RNA methyltransferase RlmH family. In terms of assembly, homodimer.

The protein localises to the cytoplasm. The catalysed reaction is pseudouridine(1915) in 23S rRNA + S-adenosyl-L-methionine = N(3)-methylpseudouridine(1915) in 23S rRNA + S-adenosyl-L-homocysteine + H(+). Its function is as follows. Specifically methylates the pseudouridine at position 1915 (m3Psi1915) in 23S rRNA. In Solibacter usitatus (strain Ellin6076), this protein is Ribosomal RNA large subunit methyltransferase H.